Reading from the N-terminus, the 574-residue chain is uncharacterized protein (574 aa).

Residues 297–317 are disordered; the sequence is SAASKPRKRKKDEVSGAQVNS.

This is an uncharacterized protein from Mus musculus (Mouse).